We begin with the raw amino-acid sequence, 51 residues long: Insulin (51 aa).

3 disulfide bridges follow: Cys-8–Cys-37, Cys-20–Cys-50, and Cys-36–Cys-41.

This sequence belongs to the insulin family. Heterodimer of a B chain and an A chain linked by two disulfide bonds.

Its subcellular location is the secreted. Insulin decreases blood glucose concentration. It increases cell permeability to monosaccharides, amino acids and fatty acids. It accelerates glycolysis, the pentose phosphate cycle, and glycogen synthesis in liver. The chain is Insulin (ins) from Platichthys flesus (European flounder).